The primary structure comprises 427 residues: Adenylosuccinate synthetase (427 aa).

Residues 12 to 18 (GDEGKGK) and 40 to 42 (GHT) each bind GTP. Aspartate 13 acts as the Proton acceptor in catalysis. Aspartate 13 and glycine 40 together coordinate Mg(2+). IMP is bound by residues 13–16 (DEGK), 38–41 (NAGH), threonine 126, arginine 140, glutamine 221, threonine 236, and arginine 299. Histidine 41 functions as the Proton donor in the catalytic mechanism. 295 to 301 (STTKRPR) is a substrate binding site. Residues arginine 301, 327-329 (KLD), and 409-411 (SVG) each bind GTP.

It belongs to the adenylosuccinate synthetase family. Homodimer. Mg(2+) is required as a cofactor.

It is found in the cytoplasm. It catalyses the reaction IMP + L-aspartate + GTP = N(6)-(1,2-dicarboxyethyl)-AMP + GDP + phosphate + 2 H(+). It functions in the pathway purine metabolism; AMP biosynthesis via de novo pathway; AMP from IMP: step 1/2. Its function is as follows. Plays an important role in the de novo pathway of purine nucleotide biosynthesis. Catalyzes the first committed step in the biosynthesis of AMP from IMP. In Borrelia recurrentis (strain A1), this protein is Adenylosuccinate synthetase.